The following is a 123-amino-acid chain: MARIAGIDLPRDKRIAIALTYIFGIGRPTADKILAETGINPDTRTRDLTDEEVARLREYIDKNVEVEGDLRREISLNIKRLMEIGCYRGLRHRRGLPVRGQRTKTNARTRKGPARTVAGKKKK.

The disordered stretch occupies residues 95–123 (GLPVRGQRTKTNARTRKGPARTVAGKKKK).

This sequence belongs to the universal ribosomal protein uS13 family. In terms of assembly, part of the 30S ribosomal subunit. Forms a loose heterodimer with protein S19. Forms two bridges to the 50S subunit in the 70S ribosome.

In terms of biological role, located at the top of the head of the 30S subunit, it contacts several helices of the 16S rRNA. In the 70S ribosome it contacts the 23S rRNA (bridge B1a) and protein L5 of the 50S subunit (bridge B1b), connecting the 2 subunits; these bridges are implicated in subunit movement. Contacts the tRNAs in the A and P-sites. This Heliobacterium modesticaldum (strain ATCC 51547 / Ice1) protein is Small ribosomal subunit protein uS13.